Consider the following 491-residue polypeptide: Chromosomal replication initiator protein DnaA (491 aa).

Positions 1-86 are domain I, interacts with DnaA modulators; it reads MTDELNSQFT…VEALSRRLGE (86 aa). The tract at residues 86 to 150 is domain II; it reads ENVELGVRIA…GADKAETPDT (65 aa). The interval 151–367 is domain III, AAA+ region; sequence SLNARYTFES…GALIRVTAFA (217 aa). ATP-binding residues include glycine 195, glycine 197, lysine 198, and threonine 199. The segment at 368–491 is domain IV, binds dsDNA; sequence SLNKSPIELS…TARIRQRSRH (124 aa).

It belongs to the DnaA family. Oligomerizes as a right-handed, spiral filament on DNA at oriC.

It localises to the cytoplasm. Plays an essential role in the initiation and regulation of chromosomal replication. ATP-DnaA binds to the origin of replication (oriC) to initiate formation of the DNA replication initiation complex once per cell cycle. Binds the DnaA box (a 9 base pair repeat at the origin) and separates the double-stranded (ds)DNA. Forms a right-handed helical filament on oriC DNA; dsDNA binds to the exterior of the filament while single-stranded (ss)DNA is stabiized in the filament's interior. The ATP-DnaA-oriC complex binds and stabilizes one strand of the AT-rich DNA unwinding element (DUE), permitting loading of DNA polymerase. After initiation quickly degrades to an ADP-DnaA complex that is not apt for DNA replication. Binds acidic phospholipids. The chain is Chromosomal replication initiator protein DnaA from Mycobacteroides abscessus (strain ATCC 19977 / DSM 44196 / CCUG 20993 / CIP 104536 / JCM 13569 / NCTC 13031 / TMC 1543 / L948) (Mycobacterium abscessus).